The following is a 93-amino-acid chain: Large ribosomal subunit protein uL23 (93 aa).

The protein belongs to the universal ribosomal protein uL23 family. Part of the 50S ribosomal subunit. Contacts protein L29, and trigger factor when it is bound to the ribosome.

Functionally, one of the early assembly proteins it binds 23S rRNA. One of the proteins that surrounds the polypeptide exit tunnel on the outside of the ribosome. Forms the main docking site for trigger factor binding to the ribosome. The chain is Large ribosomal subunit protein uL23 from Nitratiruptor sp. (strain SB155-2).